The sequence spans 323 residues: Elongation factor P--(R)-beta-lysine ligase (323 aa).

Ser-76–Glu-78 is a substrate binding site. Residues Arg-100–Glu-102 and Asn-109 each bind ATP. Tyr-118 provides a ligand contact to substrate. Glu-242–Leu-243 is an ATP binding site. Glu-249 provides a ligand contact to substrate. Gly-298 contacts ATP.

It belongs to the class-II aminoacyl-tRNA synthetase family. EpmA subfamily. In terms of assembly, homodimer.

It catalyses the reaction D-beta-lysine + L-lysyl-[protein] + ATP = N(6)-((3R)-3,6-diaminohexanoyl)-L-lysyl-[protein] + AMP + diphosphate + H(+). Functionally, with EpmB is involved in the beta-lysylation step of the post-translational modification of translation elongation factor P (EF-P). Catalyzes the ATP-dependent activation of (R)-beta-lysine produced by EpmB, forming a lysyl-adenylate, from which the beta-lysyl moiety is then transferred to the epsilon-amino group of a conserved specific lysine residue in EF-P. The protein is Elongation factor P--(R)-beta-lysine ligase of Pasteurella multocida (strain Pm70).